A 205-amino-acid polypeptide reads, in one-letter code: MSNAEATTSSDRTGTGKAEAESVHNPEAERVRALLEPSVQAHRLYLEDVSIHVAGANRVVHVVVDLPQEETGGVSLDVIAEISKELSGILDGDPSYDSRPYDLEVSSPGVGRPLTEPRHWHRARGRMVKVNVIQGENLTGRIQSVDDDGVTLVPEIAAKKGMKPKQGEPEKIPFDRIRNGKVEIEFSHLDEVGLEDENNGPSEEA.

The span at 1 to 13 shows a compositional bias: polar residues; that stretch reads MSNAEATTSSDRT. A disordered region spans residues 1-27; the sequence is MSNAEATTSSDRTGTGKAEAESVHNPE. Residues 18-27 show a composition bias toward basic and acidic residues; it reads AEAESVHNPE.

This sequence belongs to the RimP family.

It is found in the cytoplasm. Functionally, required for maturation of 30S ribosomal subunits. The polypeptide is Ribosome maturation factor RimP (Arthrobacter sp. (strain FB24)).